Consider the following 145-residue polypeptide: Large ribosomal subunit protein uL16 (145 aa).

Belongs to the universal ribosomal protein uL16 family. As to quaternary structure, part of the 50S ribosomal subunit.

Binds 23S rRNA and is also seen to make contacts with the A and possibly P site tRNAs. This chain is Large ribosomal subunit protein uL16, found in Shouchella clausii (strain KSM-K16) (Alkalihalobacillus clausii).